Consider the following 172-residue polypeptide: Protein-export protein SecB (172 aa).

Belongs to the SecB family. Homotetramer, a dimer of dimers. One homotetramer interacts with 1 SecA dimer.

Its subcellular location is the cytoplasm. In terms of biological role, one of the proteins required for the normal export of preproteins out of the cell cytoplasm. It is a molecular chaperone that binds to a subset of precursor proteins, maintaining them in a translocation-competent state. It also specifically binds to its receptor SecA. This Bordetella avium (strain 197N) protein is Protein-export protein SecB.